The following is a 167-amino-acid chain: HTH-type transcriptional repressor IacR (167 aa).

Positions 1-10 (MSNAKNTSAA) are enriched in polar residues. Residues 1–25 (MSNAKNTSAASPARKGHSHHDPASD) form a disordered region. The HTH marR-type domain occupies 30–162 (EDFPFYWLAR…LNRMLEVVFH (133 aa)). The segment at residues 76–99 (ISEISTHAIAKLSTITKIVYRMKE) is a DNA-binding region (H-T-H motif).

Exposure to indole-3-acetic acid (IAA) probably relieves the repressor activity. In terms of biological role, probably acts as a repressor of iacA expression. In Pseudomonas putida (Arthrobacter siderocapsulatus), this protein is HTH-type transcriptional repressor IacR.